Here is a 385-residue protein sequence, read N- to C-terminus: Multidrug resistance protein MdtE (385 aa).

An N-terminal signal peptide occupies residues Met1 to Ala20. The N-palmitoyl cysteine moiety is linked to residue Cys21. A lipid anchor (S-diacylglycerol cysteine) is attached at Cys21.

It belongs to the membrane fusion protein (MFP) (TC 8.A.1) family. As to quaternary structure, homotrimer. Part of the tripartite efflux system MdtEF-TolC, which is composed of an inner membrane transporter, MdtF, a membrane fusion protein, MdtE, and an outer membrane component, TolC. The complex forms a large protein conduit and can translocate molecules across both the inner and outer membranes.

The protein resides in the cell inner membrane. Functionally, part of the tripartite efflux system MdtEF-TolC, which confers resistance to compounds such as rhodamine 6G, erythromycin, doxorubicin, ethidium bromide, TPP, SDS, deoxycholate, crystal violet and benzalkonium. This is Multidrug resistance protein MdtE (mdtE) from Escherichia coli (strain K12).